A 1142-amino-acid chain; its full sequence is Serine/threonine-protein kinase dst2 (1142 aa).

Positions 20–276 (FELIEEIAEG…ATELLKHPFV (257 aa)) constitute a Protein kinase domain. ATP is bound by residues 26–34 (IAEGSFGTV) and Lys-49. The active-site Proton acceptor is Asp-141. The segment covering 300–322 (LEEGGDEDEDSSEQEGMDSDDKD) has biased composition (acidic residues). 5 disordered regions span residues 300–492 (LEEG…KTLE), 515–636 (KKQQ…KSTP), 744–768 (ETNH…TEQR), 939–974 (SIEE…GSVT), and 1040–1142 (EEQK…DNQD). A compositionally biased stretch (basic and acidic residues) spans 323 to 336 (SDLKKSVGTSDRKS). Residues 355-365 (QRKSTGQNLQL) show a composition bias toward polar residues. Positions 371 to 390 (QQSSSSSSSSSSSLSSQSLQ) are enriched in low complexity. The segment covering 391 to 413 (PQAVNKSTDRLSANINGSNTKSN) has biased composition (polar residues). A compositionally biased stretch (low complexity) spans 421–452 (AAASASASSLNLSTGNLQQSLSGSGSITTNSG). The span at 467-477 (SSDDRSPDIRT) shows a compositional bias: basic and acidic residues. Residues 541–554 (KQNAAKATQQQKQS) show a composition bias toward low complexity. 4 stretches are compositionally biased toward basic and acidic residues: residues 555 to 588 (AAKE…KKNQ), 597 to 635 (KVTD…DKST), 744 to 760 (ETNH…EQHI), and 939 to 969 (SIEE…EQKK). Residues 716–1050 (QEYHTVLREN…EQKKSKLKLK (335 aa)) adopt a coiled-coil conformation. A compositionally biased stretch (low complexity) spans 1068-1091 (TGTTPPSTSSNQKTLNNSNGASSN).

This sequence belongs to the protein kinase superfamily. STE Ser/Thr protein kinase family. STE20 subfamily. Mg(2+) serves as cofactor.

The catalysed reaction is L-seryl-[protein] + ATP = O-phospho-L-seryl-[protein] + ADP + H(+). It carries out the reaction L-threonyl-[protein] + ATP = O-phospho-L-threonyl-[protein] + ADP + H(+). This Dictyostelium discoideum (Social amoeba) protein is Serine/threonine-protein kinase dst2.